A 416-amino-acid polypeptide reads, in one-letter code: Gamma-glutamyl phosphate reductase (416 aa).

Belongs to the gamma-glutamyl phosphate reductase family.

The protein resides in the cytoplasm. It catalyses the reaction L-glutamate 5-semialdehyde + phosphate + NADP(+) = L-glutamyl 5-phosphate + NADPH + H(+). It participates in amino-acid biosynthesis; L-proline biosynthesis; L-glutamate 5-semialdehyde from L-glutamate: step 2/2. Catalyzes the NADPH-dependent reduction of L-glutamate 5-phosphate into L-glutamate 5-semialdehyde and phosphate. The product spontaneously undergoes cyclization to form 1-pyrroline-5-carboxylate. In Salmonella paratyphi A (strain AKU_12601), this protein is Gamma-glutamyl phosphate reductase.